A 375-amino-acid chain; its full sequence is Glucokinase 1 (375 aa).

25–30 is an ATP binding site; the sequence is CDVGGS.

This sequence belongs to the bacterial glucokinase family. As to quaternary structure, monomer. Post-translationally, the N-terminus is blocked.

It catalyses the reaction D-glucose + ATP = D-glucose 6-phosphate + ADP + H(+). In Trichomonas vaginalis, this protein is Glucokinase 1 (GK1).